A 323-amino-acid polypeptide reads, in one-letter code: DNA repair and recombination protein RadA (323 aa).

114–121 is an ATP binding site; that stretch reads GEFGSGKT.

Belongs to the eukaryotic RecA-like protein family.

Functionally, involved in DNA repair and in homologous recombination. Binds and assemble on single-stranded DNA to form a nucleoprotein filament. Hydrolyzes ATP in a ssDNA-dependent manner and promotes DNA strand exchange between homologous DNA molecules. This is DNA repair and recombination protein RadA from Picrophilus torridus (strain ATCC 700027 / DSM 9790 / JCM 10055 / NBRC 100828 / KAW 2/3).